A 186-amino-acid chain; its full sequence is Calcium-binding protein NCSA (186 aa).

EF-hand domains follow at residues 40 to 58 (SGTI…MGVG), 66 to 93 (LFNV…ITRG), 94 to 129 (TPEE…MYKL), and 142 to 177 (DPHD…NPDI). Residues aspartate 107, aspartate 109, asparagine 111, tyrosine 113, glutamate 118, aspartate 155, aspartate 157, aspartate 159, tyrosine 161, and glutamate 166 each contribute to the Ca(2+) site.

This sequence belongs to the recoverin family.

Functionally, may prevent cells from entering development prematurely in the presence of environmental nutrients. In Dictyostelium discoideum (Social amoeba), this protein is Calcium-binding protein NCSA (ncsA).